Here is a 349-residue protein sequence, read N- to C-terminus: Tribbles homolog 3 (349 aa).

The interaction with DDIT3/CHOP stretch occupies residues 1–122 (MRATSLAASA…QHVARPTEVL (122 aa)). Residues 35–57 (VRDEPEPGPTPSLPPASDLSPAV) form a disordered region. The Protein kinase domain maps to 63–310 (LGPYILLERE…ALGILLHPWL (248 aa)). Residues 317–349 (VSPPRSDRREMDQVVPDGPQLEEAEEGEVGLYG) form a disordered region. The segment covering 336-349 (QLEEAEEGEVGLYG) has biased composition (acidic residues).

It belongs to the protein kinase superfamily. CAMK Ser/Thr protein kinase family. Tribbles subfamily. As to quaternary structure, interacts with AKT1, AKT2, MAP2K1 and MAP2K7. Interacts with ATF4. Interacts with DDIT3/CHOP and inhibits its interaction with EP300/P300. Interacts with APOBEC3C. Interacts (via N-terminus) with APOBEC3A. Interacts with RELA. In terms of tissue distribution, detected only in the lung. Not detected in the heart, brain, spleen, liver, skeletal muscle, kidney and testis.

It localises to the nucleus. Inactive protein kinase which acts as a regulator of the integrated stress response (ISR), a process for adaptation to various stress. Inhibits the transcriptional activity of DDIT3/CHOP and is involved in DDIT3/CHOP-dependent cell death during ER stress. May play a role in programmed neuronal cell death but does not appear to affect non-neuronal cells. Acts as a negative feedback regulator of the ATF4-dependent transcription during the ISR: while TRIB3 expression is promoted by ATF4, TRIB3 protein interacts with ATF4 and inhibits ATF4 transcription activity. Disrupts insulin signaling by binding directly to Akt kinases and blocking their activation. May bind directly to and mask the 'Thr-308' phosphorylation site in AKT1. Interacts with the NF-kappa-B transactivator p65 RELA and inhibits its phosphorylation and thus its transcriptional activation activity. Interacts with MAPK kinases and regulates activation of MAP kinases. Can inhibit APOBEC3A editing of nuclear DNA. The protein is Tribbles homolog 3 (Trib3) of Rattus norvegicus (Rat).